The following is a 387-amino-acid chain: Probable multidrug resistance protein EmrK (387 aa).

The Cytoplasmic portion of the chain corresponds to Met1–Tyr16. The chain crosses the membrane as a helical span at residues Phe17–Met37. The Periplasmic segment spans residues Glu38 to Leu387.

This sequence belongs to the membrane fusion protein (MFP) (TC 8.A.1) family. Part of the tripartite efflux system EmrYK-TolC, which is composed of an inner membrane transporter, EmrY, a membrane fusion protein, EmrK, and an outer membrane component, TolC. The complex forms a large protein conduit and can translocate molecules across both the inner and outer membranes.

Its subcellular location is the cell inner membrane. Part of the tripartite efflux system EmrYK-TolC, which confers resistance to various drugs. The chain is Probable multidrug resistance protein EmrK (emrK) from Escherichia coli (strain K12).